A 185-amino-acid chain; its full sequence is Serine/arginine-rich splicing factor RSZ21 (185 aa).

One can recognise an RRM domain in the interval Ala2–Ser73. The CCHC-type zinc-finger motif lies at Met86–Leu103. Residues Arg104–Ser185 are disordered. Residues Gly113–Ser123 are compositionally biased toward basic residues. Composition is skewed to low complexity over residues Arg124 to Ser138 and Val151 to Ser162.

Belongs to the splicing factor SR family. In terms of processing, extensively phosphorylated on serine residues in the RS domain. As to expression, expressed in roots, leaves and immature seeds.

The protein resides in the nucleus. Involved in pre-mRNA splicing. This Oryza sativa subsp. japonica (Rice) protein is Serine/arginine-rich splicing factor RSZ21 (RSZP21).